We begin with the raw amino-acid sequence, 392 residues long: Formate-dependent phosphoribosylglycinamide formyltransferase (392 aa).

Residues 22–23 and E82 each bind N(1)-(5-phospho-beta-D-ribosyl)glycinamide; that span reads EL. ATP is bound by residues R114, K155, 160 to 165, 195 to 198, and E203; these read SSGKGQ and EGVV. Residues 119–308 enclose the ATP-grasp domain; sequence RLAAEELGLP…EFALHVRAFL (190 aa). Positions 267 and 279 each coordinate Mg(2+). Residues D286, K355, and 362-363 each bind N(1)-(5-phospho-beta-D-ribosyl)glycinamide; that span reads RR.

The protein belongs to the PurK/PurT family. As to quaternary structure, homodimer.

It carries out the reaction N(1)-(5-phospho-beta-D-ribosyl)glycinamide + formate + ATP = N(2)-formyl-N(1)-(5-phospho-beta-D-ribosyl)glycinamide + ADP + phosphate + H(+). The protein operates within purine metabolism; IMP biosynthesis via de novo pathway; N(2)-formyl-N(1)-(5-phospho-D-ribosyl)glycinamide from N(1)-(5-phospho-D-ribosyl)glycinamide (formate route): step 1/1. Its function is as follows. Involved in the de novo purine biosynthesis. Catalyzes the transfer of formate to 5-phospho-ribosyl-glycinamide (GAR), producing 5-phospho-ribosyl-N-formylglycinamide (FGAR). Formate is provided by PurU via hydrolysis of 10-formyl-tetrahydrofolate. The protein is Formate-dependent phosphoribosylglycinamide formyltransferase of Salmonella arizonae (strain ATCC BAA-731 / CDC346-86 / RSK2980).